A 360-amino-acid chain; its full sequence is Archaemetzincin-2 (360 aa).

His254 contacts Zn(2+). The active-site Proton acceptor is Glu255. Residues His258, His264, Cys265, Cys270, Cys289, and Cys292 each contribute to the Zn(2+) site.

Belongs to the peptidase M54 family. Zn(2+) is required as a cofactor. Down-regulated in testis from patients with maturation arrest (MA) or Sertoli cell-only syndrome (SCOS).

Its function is as follows. Probable zinc metalloprotease. The sequence is that of Archaemetzincin-2 (AMZ2) from Homo sapiens (Human).